The sequence spans 377 residues: Erythronate-4-phosphate dehydrogenase (377 aa).

Substrate-binding residues include S59 and T81. D162 contributes to the NAD(+) binding site. The active site involves R237. D260 contributes to the NAD(+) binding site. Residue E265 is part of the active site. The Proton donor role is filled by H282. G285 is a binding site for NAD(+). Y286 contacts substrate.

Belongs to the D-isomer specific 2-hydroxyacid dehydrogenase family. PdxB subfamily. Homodimer.

The protein localises to the cytoplasm. It carries out the reaction 4-phospho-D-erythronate + NAD(+) = (R)-3-hydroxy-2-oxo-4-phosphooxybutanoate + NADH + H(+). Its pathway is cofactor biosynthesis; pyridoxine 5'-phosphate biosynthesis; pyridoxine 5'-phosphate from D-erythrose 4-phosphate: step 2/5. Its function is as follows. Catalyzes the oxidation of erythronate-4-phosphate to 3-hydroxy-2-oxo-4-phosphonooxybutanoate. The protein is Erythronate-4-phosphate dehydrogenase of Psychrobacter arcticus (strain DSM 17307 / VKM B-2377 / 273-4).